We begin with the raw amino-acid sequence, 81 residues long: Large ribosomal subunit protein bL31B (81 aa).

It belongs to the bacterial ribosomal protein bL31 family. Type B subfamily. As to quaternary structure, part of the 50S ribosomal subunit.

The chain is Large ribosomal subunit protein bL31B from Limosilactobacillus fermentum (strain NBRC 3956 / LMG 18251) (Lactobacillus fermentum).